The sequence spans 343 residues: C5a anaphylatoxin chemotactic receptor 2 (343 aa).

Over 1 to 44 (MLNDTTSKDYEYEYDQEQYSDLLNVPVDCPAGNCFSNDAYLIVL) the chain is Extracellular. Residue N3 is glycosylated (N-linked (GlcNAc...) asparagine). A helical transmembrane segment spans residues 45 to 67 (LGLYSVIFLVGVPGNTLLAWVTW). Over 68–78 (KESRHRLGASW) the chain is Cytoplasmic. Residues 79–101 (FLHLTMADLLCCVSLPFLAVPIA) traverse the membrane as a helical segment. Residues 102–120 (QKGHWPYGTAGCWLLSSIT) are Extracellular-facing. Cysteines 113 and 192 form a disulfide. The chain crosses the membrane as a helical span at residues 121–143 (VLSMYASVLLLTGLSGDLFLLAF). Residues 144–155 (RPSWKNADQRTC) lie on the Cytoplasmic side of the membrane. Residues 156–178 (GVRVVQVSSWMLALLLTVPGAVY) traverse the membrane as a helical segment. At 179–208 (RKLLQEHYPPRLVCGTNYGGSVTAEVTITT) the chain is on the extracellular side. The helical transmembrane segment at 209–231 (VRFLFGFLVPLVFMASCHGILQR) threads the bilayer. Residues 232-243 (QMARRHWPLGTA) are Cytoplasmic-facing. Residues 244–266 (VVVGFFICWTPFHLLRVIIAVAS) traverse the membrane as a helical segment. The Extracellular portion of the chain corresponds to 267 to 280 (SHSPLLAWALEAEP). Residues 281 to 300 (LVTGLALAHSALNPIMFLYF) form a helical membrane-spanning segment. The Cytoplasmic portion of the chain corresponds to 301–343 (GRKQLCKSLQAACHWALRDLQDEEESAVTKVSTSQEMVSEMPV). S326 is modified (phosphoserine).

It belongs to the G-protein coupled receptor 1 family. Interacts with C3 (the anaphylatoxin peptide C3a and the adipogenic hormone ASP); the interaction occurs with higher affinity for ASP, enhancing the phosphorylation and activation of GPR77, recruitment of ARRB2 to the cell surface and endocytosis of GRP77.

The protein resides in the cell membrane. Functionally, receptor for the chemotactic and inflammatory C3a, C4a and C5a anaphylatoxin peptides and also for their dearginated forms ASP/C3adesArg, C4adesArg and C5adesArg respectively. Couples weakly to G(i)-mediated signaling pathways. This Rattus norvegicus (Rat) protein is C5a anaphylatoxin chemotactic receptor 2 (C5ar2).